Here is a 1785-residue protein sequence, read N- to C-terminus: Plexin-2 (1785 aa).

The first 17 residues, 1-17, serve as a signal peptide directing secretion; that stretch reads MLPESVFLLLISHFLRA. The 427-residue stretch at 18–444 folds into the Sema domain; sequence VTQPPFETEG…MPYGIILEEL (427 aa). Residues 18–1139 lie on the Extracellular side of the membrane; sequence VTQPPFETEG…SDHALPSRLS (1122 aa). The N-linked (GlcNAc...) asparagine glycan is linked to N66. 9 disulfide bridges follow: C84–C91, C118–C126, C247–C349, C263–C300, C318–C336, C447–C464, C453–C487, C456–C473, and C467–C479. An N-linked (GlcNAc...) asparagine glycan is attached at N249. The region spanning 446–488 is the PSI 1 domain; that stretch reads TCSHHSSCTECLVSVDPLCQWCHPTQSCTTSARCTSPVTSQCP. Residues N502, N536, and N572 are each glycosylated (N-linked (GlcNAc...) asparagine). C524 and C544 are oxidised to a cystine. In terms of domain architecture, PSI 2 spans 577 to 617; that stretch reads DCSGYGTCSSCMSSEYNCAWCSGLHKCSNSCGALEKSKACV. 2 N-linked (GlcNAc...) asparagine glycosylation sites follow: N679 and N702. A PSI 3 domain is found at 707-748; that stretch reads SCTNLASDCSSCLALSPSLSCGWCNRQCSHECHESKATAVCD. 3 consecutive IPT/TIG domains span residues 750–837, 840–924, and 928–1040; these read PRID…LYSF, TSIF…PFEY, and PSIS…LSPF. N-linked (GlcNAc...) asparagine glycosylation is found at N864, N886, N984, and N1016. A helical membrane pass occupies residues 1140–1160; that stretch reads LLILGLLLFIVVTLTVMCLVF. The stretch at 1159 to 1197 forms a coiled coil; the sequence is VFKRRRQEREKEYRKIQLQMENLENNVRKECKQAFAELQ. At 1161-1785 the chain is on the cytoplasmic side; that stretch reads KRRRQEREKE…HIYSTISDYE (625 aa).

It belongs to the plexin family. Interacts with mab-20. Expressed predominantly in the central nervous system from embryonic to adult stages. Expressed in early embryos in ventral neuroblasts. Expressed in neurons and in a subset of posterior lateral and ventral epidermal cells following epidermal enclosure. Present in neurons, muscles and weakly expressed in epidermal cells of the larval tail.

Its subcellular location is the cell membrane. In terms of biological role, involved as a receptor for mab-20/sema-2a in the formation or stabilization of cell-cell contacts at several stages of epithelial morphogenesis. In early embryonic development, required for proper ventral closure of the epidermis. During male tail morphogenesis, involved in precursor cell sorting and in the formation of distinct sensory rays. Involved in axon guidance of SDQL neurons during neurogenesis. Probably in response to stimulation by mab-20, regulates fln-1-mediated remodeling of the actin cytoskeleton and thus axon guidance and/or fasciculation of DD/VD neurons. This is Plexin-2 from Caenorhabditis elegans.